The chain runs to 431 residues: Tyrosine--tRNA ligase (431 aa).

Tyrosine 34 provides a ligand contact to L-tyrosine. The short motif at 39–48 (PTADSLHIGH) is the 'HIGH' region element. 2 residues coordinate L-tyrosine: tyrosine 171 and glutamine 175. A 'KMSKS' region motif is present at residues 231 to 235 (KFGKT). Residue lysine 234 coordinates ATP. The S4 RNA-binding domain maps to 353–422 (INVVEALVKT…GKYTILRRGK (70 aa)).

The protein belongs to the class-I aminoacyl-tRNA synthetase family. TyrS type 1 subfamily. As to quaternary structure, homodimer.

Its subcellular location is the cytoplasm. It carries out the reaction tRNA(Tyr) + L-tyrosine + ATP = L-tyrosyl-tRNA(Tyr) + AMP + diphosphate + H(+). Functionally, catalyzes the attachment of tyrosine to tRNA(Tyr) in a two-step reaction: tyrosine is first activated by ATP to form Tyr-AMP and then transferred to the acceptor end of tRNA(Tyr). The sequence is that of Tyrosine--tRNA ligase from Neisseria meningitidis serogroup C / serotype 2a (strain ATCC 700532 / DSM 15464 / FAM18).